Here is a 309-residue protein sequence, read N- to C-terminus: 4-hydroxy-3-methylbut-2-enyl diphosphate reductase (309 aa).

C12 contributes to the [4Fe-4S] cluster binding site. Positions 43 and 77 each coordinate (2E)-4-hydroxy-3-methylbut-2-enyl diphosphate. Residues H43 and H77 each contribute to the dimethylallyl diphosphate site. Positions 43 and 77 each coordinate isopentenyl diphosphate. Position 99 (C99) interacts with [4Fe-4S] cluster. Position 127 (H127) interacts with (2E)-4-hydroxy-3-methylbut-2-enyl diphosphate. Dimethylallyl diphosphate is bound at residue H127. Residue H127 participates in isopentenyl diphosphate binding. Residue E129 is the Proton donor of the active site. T167 is a binding site for (2E)-4-hydroxy-3-methylbut-2-enyl diphosphate. C197 contacts [4Fe-4S] cluster. (2E)-4-hydroxy-3-methylbut-2-enyl diphosphate is bound by residues S225, S226, N227, and S269. Positions 225, 226, 227, and 269 each coordinate dimethylallyl diphosphate. Isopentenyl diphosphate is bound by residues S225, S226, N227, and S269.

This sequence belongs to the IspH family. [4Fe-4S] cluster is required as a cofactor.

The catalysed reaction is isopentenyl diphosphate + 2 oxidized [2Fe-2S]-[ferredoxin] + H2O = (2E)-4-hydroxy-3-methylbut-2-enyl diphosphate + 2 reduced [2Fe-2S]-[ferredoxin] + 2 H(+). It catalyses the reaction dimethylallyl diphosphate + 2 oxidized [2Fe-2S]-[ferredoxin] + H2O = (2E)-4-hydroxy-3-methylbut-2-enyl diphosphate + 2 reduced [2Fe-2S]-[ferredoxin] + 2 H(+). It functions in the pathway isoprenoid biosynthesis; dimethylallyl diphosphate biosynthesis; dimethylallyl diphosphate from (2E)-4-hydroxy-3-methylbutenyl diphosphate: step 1/1. It participates in isoprenoid biosynthesis; isopentenyl diphosphate biosynthesis via DXP pathway; isopentenyl diphosphate from 1-deoxy-D-xylulose 5-phosphate: step 6/6. Functionally, catalyzes the conversion of 1-hydroxy-2-methyl-2-(E)-butenyl 4-diphosphate (HMBPP) into a mixture of isopentenyl diphosphate (IPP) and dimethylallyl diphosphate (DMAPP). Acts in the terminal step of the DOXP/MEP pathway for isoprenoid precursor biosynthesis. This chain is 4-hydroxy-3-methylbut-2-enyl diphosphate reductase, found in Wolbachia pipientis wMel.